Consider the following 331-residue polypeptide: MKQTVYTASPESQQIHVWSLEADGKLTLVQVVDAPGQVQPMVVSPNKEFLYVGVRPEFRVLAYRITPDNGALTFAGEAALPGSPTHISTDHHGRFVFSASYNQGCVSVTPLHDGLPGETITVVEGLEGCHSANISPDNRTLWVPALKQDRICLFTLSDDGFLSAQEPAEVTTVEGAGPRHMVFHPNQQYGYCVNELNSSIDVWELKDPKGNIECVQTLDMMPPDFSGVRWAADIHITPDGGHLYACDRTASIITVFSVSEDGSVLAVEGYQPTETQPRGFNLDHSGKYLIAAGQKSHHIAVYDIVGEQGLLQEKGRYAVGQGPMWVVVNAH.

This sequence belongs to the cycloisomerase 2 family.

It catalyses the reaction 6-phospho-D-glucono-1,5-lactone + H2O = 6-phospho-D-gluconate + H(+). The protein operates within carbohydrate degradation; pentose phosphate pathway; D-ribulose 5-phosphate from D-glucose 6-phosphate (oxidative stage): step 2/3. In terms of biological role, catalyzes the hydrolysis of 6-phosphogluconolactone to 6-phosphogluconate. The polypeptide is 6-phosphogluconolactonase (Klebsiella pneumoniae subsp. pneumoniae (strain ATCC 700721 / MGH 78578)).